The following is a 356-amino-acid chain: Phosphoribosylformylglycinamidine cyclo-ligase (356 aa).

This sequence belongs to the AIR synthase family.

It is found in the cytoplasm. It catalyses the reaction 2-formamido-N(1)-(5-O-phospho-beta-D-ribosyl)acetamidine + ATP = 5-amino-1-(5-phospho-beta-D-ribosyl)imidazole + ADP + phosphate + H(+). The protein operates within purine metabolism; IMP biosynthesis via de novo pathway; 5-amino-1-(5-phospho-D-ribosyl)imidazole from N(2)-formyl-N(1)-(5-phospho-D-ribosyl)glycinamide: step 2/2. In Sinorhizobium medicae (strain WSM419) (Ensifer medicae), this protein is Phosphoribosylformylglycinamidine cyclo-ligase.